Consider the following 342-residue polypeptide: Phosphate acyltransferase (342 aa).

This sequence belongs to the PlsX family. In terms of assembly, homodimer. Probably interacts with PlsY.

It localises to the cytoplasm. It carries out the reaction a fatty acyl-[ACP] + phosphate = an acyl phosphate + holo-[ACP]. Its pathway is lipid metabolism; phospholipid metabolism. In terms of biological role, catalyzes the reversible formation of acyl-phosphate (acyl-PO(4)) from acyl-[acyl-carrier-protein] (acyl-ACP). This enzyme utilizes acyl-ACP as fatty acyl donor, but not acyl-CoA. This chain is Phosphate acyltransferase, found in Alkalilimnicola ehrlichii (strain ATCC BAA-1101 / DSM 17681 / MLHE-1).